The primary structure comprises 533 residues: Calcium uptake protein 1 homolog, mitochondrial (533 aa).

A mitochondrion-targeting transit peptide spans 1-13 (MLRHNFRSSIFIR). Residues 127-147 (PFRPEASQKEESTDSGTEIEV) form a disordered region. EF-hand domains lie at 270–305 (TSHA…IMSQ), 337–358 (KDGK…LQHD), and 465–500 (LSDH…RMRR). Ca(2+) contacts are provided by Asp283, Asp285, Asn287, and Glu294.

It belongs to the MICU1 family. MICU1 subfamily.

It is found in the mitochondrion intermembrane space. The protein localises to the mitochondrion inner membrane. Functionally, calcium sensor of the mitochondrial calcium uniporter (mcu-1) channel, which senses calcium level via its EF-hand domains. At low calcium levels, micu-1 occludes the pore of the mcu-1 channel, preventing mitochondrial calcium uptake. At higher calcium levels, calcium-binding to micu-1 induces a conformational change that weakens mcu-1-micu-1 interactions and moves micu-1 away from the pore, allowing calcium permeation through the mcu-1 channel. Also required to protect against manganese toxicity by preventing manganese uptake by mcu-1. Modulates the activity of the mitochondrial calcium uniporter protein mcu-1 depending on the level of intracellular calcium in PLM touch receptor neurons following axonal injury. The chain is Calcium uptake protein 1 homolog, mitochondrial from Caenorhabditis briggsae.